A 180-amino-acid polypeptide reads, in one-letter code: Cell wall / vacuolar inhibitor of fructosidase 2 (180 aa).

An N-terminal signal peptide occupies residues 1-23 (MASSLIFLLLVTLTFSASTLISA). An N-linked (GlcNAc...) asparagine glycan is attached at Asn26. A disulfide bond links Cys35 and Cys44. Residues Asn73 and Asn84 are each glycosylated (N-linked (GlcNAc...) asparagine). Cys101 and Cys141 are oxidised to a cystine.

Belongs to the PMEI family. As to expression, mostly expressed at low levels in seedlings, stems, leaves and flowers (in all organs), and, to a lower extent, in roots and siliques.

The protein localises to the vacuole. Functionally, inhibits fructosidases from both cell wall (cell wall invertase CWI) and vacuoles (vacuolar invertase VI). The chain is Cell wall / vacuolar inhibitor of fructosidase 2 (C/VIF2) from Arabidopsis thaliana (Mouse-ear cress).